Here is a 372-residue protein sequence, read N- to C-terminus: Glutamate 5-kinase (372 aa).

Lys-14 serves as a coordination point for ATP. Substrate contacts are provided by Ser-54, Asp-141, and Asn-153. ATP is bound by residues 173-174 (TD) and 215-221 (TGGMLTK). The PUA domain maps to 280–358 (AGRLVLDDGA…RDIERLLGYV (79 aa)).

The protein belongs to the glutamate 5-kinase family.

It localises to the cytoplasm. The enzyme catalyses L-glutamate + ATP = L-glutamyl 5-phosphate + ADP. Its pathway is amino-acid biosynthesis; L-proline biosynthesis; L-glutamate 5-semialdehyde from L-glutamate: step 1/2. Catalyzes the transfer of a phosphate group to glutamate to form L-glutamate 5-phosphate. The sequence is that of Glutamate 5-kinase from Laribacter hongkongensis (strain HLHK9).